Here is a 95-residue protein sequence, read N- to C-terminus: UPF0235 protein Adeh_1087 (95 aa).

This sequence belongs to the UPF0235 family.

In Anaeromyxobacter dehalogenans (strain 2CP-C), this protein is UPF0235 protein Adeh_1087.